A 458-amino-acid chain; its full sequence is Probable mitochondrial chaperone BCS1-B (458 aa).

The Mitochondrial intermembrane segment spans residues 1–26 (MENVITNNNKGLPKSILKFIPEPIQP). The chain crosses the membrane as a helical span at residues 27–47 (LFENPFFSAGFGLIGVGSILA). Residues 48-458 (MGRKGFQQAM…INNLNELIKK (411 aa)) lie on the Mitochondrial matrix side of the membrane. 248–255 (GPPGTGKS) is a binding site for ATP.

Belongs to the AAA ATPase family. BCS1 subfamily.

Its subcellular location is the mitochondrion inner membrane. The catalysed reaction is ATP + H2O = ADP + phosphate + H(+). Chaperone necessary for the assembly of mitochondrial respiratory chain complex III. The chain is Probable mitochondrial chaperone BCS1-B (bcsl1b) from Dictyostelium discoideum (Social amoeba).